A 294-amino-acid chain; its full sequence is ATP synthase gamma chain (294 aa).

Belongs to the ATPase gamma chain family. F-type ATPases have 2 components, CF(1) - the catalytic core - and CF(0) - the membrane proton channel. CF(1) has five subunits: alpha(3), beta(3), gamma(1), delta(1), epsilon(1). CF(0) has three main subunits: a, b and c.

It localises to the cell membrane. Its function is as follows. Produces ATP from ADP in the presence of a proton gradient across the membrane. The gamma chain is believed to be important in regulating ATPase activity and the flow of protons through the CF(0) complex. The polypeptide is ATP synthase gamma chain (Opitutus terrae (strain DSM 11246 / JCM 15787 / PB90-1)).